Here is a 143-residue protein sequence, read N- to C-terminus: MNTYTVKANDIKRDWHVIDASGRVLGEVAAEAAKYLMGKHKPMFCRNLDCGDYVVIVNAKKITVTGNKLDQKMYYRHSGFPGGFRQEKLGDLLKTKPLFVIEHAVKGMIPRNTLGAQILAKLKVYEGAEHPHASQTGVVSKES.

It belongs to the universal ribosomal protein uL13 family. Part of the 50S ribosomal subunit.

Its function is as follows. This protein is one of the early assembly proteins of the 50S ribosomal subunit, although it is not seen to bind rRNA by itself. It is important during the early stages of 50S assembly. The sequence is that of Large ribosomal subunit protein uL13 from Dehalococcoides mccartyi (strain CBDB1).